The primary structure comprises 323 residues: Sphingolipid delta(4)-desaturase/C4-monooxygenase DES2 (323 aa).

The N-myristoyl glycine moiety is linked to residue Gly-2. 2 helical membrane-spanning segments follow: residues 45–65 and 68–88; these read WAVL…RGLA and WLLF…TLAI. The Histidine box-1 signature appears at 89–93; it reads HDISH. The segment at 95-99 is required for C4-hydroxylase activity; the sequence is AAFGT. Residues 128 to 132 carry the Histidine box-2 motif; it reads HVDHH. Residues 210–231 form a helical membrane-spanning segment; it reads VYLLASSFLGLGLHPISGHFVA. Positions 259 to 263 match the Histidine box-3 motif; that stretch reads HVEHH.

Belongs to the fatty acid desaturase type 1 family. DEGS subfamily. In terms of tissue distribution, highly expressed in skin, intestine and kidney.

The protein localises to the endoplasmic reticulum membrane. It carries out the reaction a dihydroceramide + 2 Fe(II)-[cytochrome b5] + O2 + 2 H(+) = a phytoceramide + 2 Fe(III)-[cytochrome b5] + H2O. The catalysed reaction is an N-acylsphinganine + 2 Fe(II)-[cytochrome b5] + O2 + 2 H(+) = an N-acylsphing-4-enine + 2 Fe(III)-[cytochrome b5] + 2 H2O. The enzyme catalyses N-octanoylsphinganine + 2 Fe(II)-[cytochrome b5] + O2 + 2 H(+) = N-octanoyl-4-hydroxysphinganine + 2 Fe(III)-[cytochrome b5] + H2O. It catalyses the reaction an N-acylsphinganine + 2 Fe(II)-[cytochrome b5] + O2 + 2 H(+) = an N-acyl-(4R)-4-hydroxysphinganine + 2 Fe(III)-[cytochrome b5] + H2O. It participates in membrane lipid metabolism; sphingolipid biosynthesis. Functionally, bifunctional enzyme which acts both as a sphingolipid delta(4)-desaturase and a sphingolipid C4-monooxygenase. The protein is Sphingolipid delta(4)-desaturase/C4-monooxygenase DES2 of Homo sapiens (Human).